The chain runs to 228 residues: Phosphatidylserine decarboxylase proenzyme (228 aa).

The Schiff-base intermediate with substrate; via pyruvic acid role is filled by S197. A Pyruvic acid (Ser); by autocatalysis modification is found at S197.

This sequence belongs to the phosphatidylserine decarboxylase family. PSD-A subfamily. Heterodimer of a large membrane-associated beta subunit and a small pyruvoyl-containing alpha subunit. Pyruvate is required as a cofactor. Is synthesized initially as an inactive proenzyme. Formation of the active enzyme involves a self-maturation process in which the active site pyruvoyl group is generated from an internal serine residue via an autocatalytic post-translational modification. Two non-identical subunits are generated from the proenzyme in this reaction, and the pyruvate is formed at the N-terminus of the alpha chain, which is derived from the carboxyl end of the proenzyme. The post-translation cleavage follows an unusual pathway, termed non-hydrolytic serinolysis, in which the side chain hydroxyl group of the serine supplies its oxygen atom to form the C-terminus of the beta chain, while the remainder of the serine residue undergoes an oxidative deamination to produce ammonia and the pyruvoyl prosthetic group on the alpha chain.

The protein localises to the cell membrane. The enzyme catalyses a 1,2-diacyl-sn-glycero-3-phospho-L-serine + H(+) = a 1,2-diacyl-sn-glycero-3-phosphoethanolamine + CO2. It functions in the pathway phospholipid metabolism; phosphatidylethanolamine biosynthesis; phosphatidylethanolamine from CDP-diacylglycerol: step 2/2. Catalyzes the formation of phosphatidylethanolamine (PtdEtn) from phosphatidylserine (PtdSer). The chain is Phosphatidylserine decarboxylase proenzyme from Bacteroides thetaiotaomicron (strain ATCC 29148 / DSM 2079 / JCM 5827 / CCUG 10774 / NCTC 10582 / VPI-5482 / E50).